Consider the following 1439-residue polypeptide: ABC transporter G family member 14 (1439 aa).

The span at 1 to 17 (MEENSNKFEQELKEIGQ) shows a compositional bias: basic and acidic residues. The interval 1-21 (MEENSNKFEQELKEIGQDRNQ) is disordered. The ABC transporter 1 domain maps to 117-370 (FSILNFFKPS…FMSLGFDCEP (254 aa)). The region spanning 475–700 (LNDKFGLFTK…GSEFDAYRIC (226 aa)) is the ABC transmembrane type-2 1 domain. The next 6 membrane-spanning stretches (helical) occupy residues 479–499 (FGLFTKYLSVLIQAFVYSSVF), 516–536 (ILSAVIFNAFLSVGEMSMTFI), 564–584 (IPFTLLQVFLFSIIAYFMFGL), 589–609 (GKFFIFSFTLVGASLACTALF), 614–634 (YLCPSMYIAQNISNVFIIFML), and 734–754 (IIVYCWWIFFVICNMLAMEYI). Residues 805 to 1049 (FTWQNIRYTV…LTSYFERHGV (245 aa)) enclose the ABC transporter 2 domain. 841–848 (GSSGAGKT) contributes to the ATP binding site. Positions 1141–1366 (YYTYGSFVQS…YNTCQNYTSA (226 aa)) constitute an ABC transmembrane type-2 2 domain. Helical transmembrane passes span 1144–1164 (YGSFVQSALCGLIIGFTFWNL), 1175–1195 (IFFIFEALMLGILLIFVVMPQ), 1217–1237 (FAISIVVVELPFIVISGTIFF), 1256–1276 (FYFWFIFVIFLFFCVSFGQAV), 1283–1303 (MFFAMTLIPLLIVFLFLFSGV), and 1413–1433 (VGIIICFFVFNILMVILFVYL).

Belongs to the ABC transporter superfamily. ABCG family. PDR (TC 3.A.1.205) subfamily.

It localises to the membrane. The protein is ABC transporter G family member 14 (abcG14) of Dictyostelium discoideum (Social amoeba).